The following is a 242-amino-acid chain: Mediator of RNA polymerase II transcription subunit 19-A (242 aa).

Residues 1–15 (MTEIFSTLFGQNDAQ) show a composition bias toward polar residues. 2 disordered regions span residues 1 to 33 (MTEI…PPPS) and 171 to 242 (PPKK…NSLR). Positions 171–184 (PPKKKSKHKHRHHH) are enriched in basic residues. Over residues 193 to 210 (TRTDPTKKKKKKDNEPER) the composition is skewed to basic and acidic residues. The segment covering 211 to 223 (RKKKKDKKKKKNR) has biased composition (basic residues). Over residues 232 to 242 (TGSQPNSNSLR) the composition is skewed to polar residues.

The protein belongs to the Mediator complex subunit 19 family. In terms of assembly, component of the Mediator complex.

It is found in the nucleus. Component of the Mediator complex, a coactivator involved in the regulated transcription of nearly all RNA polymerase II-dependent genes. Mediator functions as a bridge to convey information from gene-specific regulatory proteins to the basal RNA polymerase II transcription machinery. Mediator is recruited to promoters by direct interactions with regulatory proteins and serves as a scaffold for the assembly of a functional preinitiation complex with RNA polymerase II and the general transcription factors. The protein is Mediator of RNA polymerase II transcription subunit 19-A (med19a) of Danio rerio (Zebrafish).